We begin with the raw amino-acid sequence, 221 residues long: Probable septum site-determining protein MinC (221 aa).

It belongs to the MinC family. As to quaternary structure, interacts with MinD and FtsZ.

Its function is as follows. Cell division inhibitor that blocks the formation of polar Z ring septums. Rapidly oscillates between the poles of the cell to destabilize FtsZ filaments that have formed before they mature into polar Z rings. Prevents FtsZ polymerization. The chain is Probable septum site-determining protein MinC from Aliivibrio fischeri (strain MJ11) (Vibrio fischeri).